The sequence spans 435 residues: MKTSLFKSLYFQVLTAIAIGILLGHYYPELGAQMKPLGDAFVKLIKMIIAPVIFCTVVTGIAGMESMKAVGRTGAVALLYFEIVSTIALIIGLIIVNVVQPGAGMNVDPATLDAQAVAVYAAQAKEQGIIAFLMDVIPGSVIGAFASGNILQVLLFAVLFGFALHRLGSKGQLIFNVIESFSQVIFGIINMIMRLAPIGAFGAMAFTIGKYGVGSLVQLGQLIICFYITCILFVVVVLGTIARVTGFSIFKFIRYIREELLIVLGTSSSESALPRMLDKMEKLGCRKSVVGLVIPTGYSFNLDGTSIYLTMAAVFIAQATNSHMDIFHQITLLVVLLLSSKGVAGVTGSGFIVLAATISAVGHLPVAGLALILGIDRFMSEARALTNLVGNGVATVVVAKWVKELDHQKLDDVLNNRAPDGKTHEISSYSRHLCP.

Transmembrane regions (helical) follow at residues 4–24 (SLFKSLYFQVLTAIAIGILLG), 44–64 (LIKMIIAPVIFCTVVTGIAGM), 76–96 (VALLYFEIVSTIALIIGLIIV), 142–162 (IGAFASGNILQVLLFAVLFGF), 184–204 (VIFGIINMIMRLAPIGAFGAM), 222–242 (LIICFYITCILFVVVVLGTIA), 289–309 (VVGLVIPTGYSFNLDGTSIYL), 326–346 (IFHQITLLVVLLLSSKGVAGV), and 352–372 (IVLAATISAVGHLPVAGLALI).

Belongs to the dicarboxylate/amino acid:cation symporter (DAACS) (TC 2.A.23) family.

The protein resides in the cell inner membrane. Its function is as follows. Responsible for the transport of dicarboxylates such as succinate, fumarate, and malate from the periplasm across the membrane. The protein is C4-dicarboxylate transport protein of Salmonella paratyphi A (strain ATCC 9150 / SARB42).